Here is a 149-residue protein sequence, read N- to C-terminus: Large ribosomal subunit protein bL9 (149 aa).

It belongs to the bacterial ribosomal protein bL9 family.

Binds to the 23S rRNA. The polypeptide is Large ribosomal subunit protein bL9 (Xylella fastidiosa (strain 9a5c)).